The primary structure comprises 277 residues: NH(3)-dependent NAD(+) synthetase (277 aa).

47 to 54 contributes to the ATP binding site; it reads GISGGQDS. Asp-53 contributes to the Mg(2+) binding site. Deamido-NAD(+) is bound at residue Arg-141. Thr-161 contacts ATP. Glu-166 provides a ligand contact to Mg(2+). Residues Lys-174 and Asp-181 each coordinate deamido-NAD(+). ATP contacts are provided by Lys-190 and Thr-212. Residue 261-262 participates in deamido-NAD(+) binding; the sequence is HK.

Belongs to the NAD synthetase family. As to quaternary structure, homodimer.

The catalysed reaction is deamido-NAD(+) + NH4(+) + ATP = AMP + diphosphate + NAD(+) + H(+). It participates in cofactor biosynthesis; NAD(+) biosynthesis; NAD(+) from deamido-NAD(+) (ammonia route): step 1/1. Its function is as follows. Catalyzes the ATP-dependent amidation of deamido-NAD to form NAD. Uses ammonia as a nitrogen source. The chain is NH(3)-dependent NAD(+) synthetase from Lactobacillus johnsonii (strain CNCM I-12250 / La1 / NCC 533).